Consider the following 426-residue polypeptide: Glutamate-1-semialdehyde 2,1-aminomutase (426 aa).

K265 carries the N6-(pyridoxal phosphate)lysine modification.

Belongs to the class-III pyridoxal-phosphate-dependent aminotransferase family. HemL subfamily. Homodimer. Requires pyridoxal 5'-phosphate as cofactor.

It localises to the cytoplasm. It carries out the reaction (S)-4-amino-5-oxopentanoate = 5-aminolevulinate. Its pathway is porphyrin-containing compound metabolism; protoporphyrin-IX biosynthesis; 5-aminolevulinate from L-glutamyl-tRNA(Glu): step 2/2. This is Glutamate-1-semialdehyde 2,1-aminomutase from Salmonella heidelberg (strain SL476).